The following is a 231-amino-acid chain: Ribosyldihydronicotinamide dehydrogenase [quinone] (231 aa).

Residues His-12 and 18-21 (FNGS) contribute to the FAD site. A Phosphoserine modification is found at Ser-80. Position 104 to 107 (104 to 107 (LYWF)) interacts with FAD. 127-129 (FDI) lines the substrate pocket. FAD-binding positions include 148-151 (TTGG) and Tyr-156. Zn(2+)-binding residues include His-174 and His-178. An FAD-binding site is contributed by Glu-194. Ser-197 carries the post-translational modification Phosphoserine. Arg-201 is an FAD binding site. Residue Cys-223 participates in Zn(2+) binding.

Belongs to the NAD(P)H dehydrogenase (quinone) family. Homodimer. It depends on Zn(2+) as a cofactor. FAD is required as a cofactor.

The protein localises to the cytoplasm. The enzyme catalyses 1-(beta-D-ribofuranosyl)-1,4-dihydronicotinamide + a quinone + H(+) = beta-nicotinamide D-riboside + a quinol. In terms of biological role, the enzyme apparently serves as a quinone reductase in connection with conjugation reactions of hydroquinones involved in detoxification pathways as well as in biosynthetic processes such as the vitamin K-dependent gamma-carboxylation of glutamate residues in prothrombin synthesis. The protein is Ribosyldihydronicotinamide dehydrogenase [quinone] (NQO2) of Pongo abelii (Sumatran orangutan).